The sequence spans 650 residues: MAGARAAAAAASAGSSASSGNQPPQELGLGELLEEFSRTQYRAKDGSGTGGSKVERIEKRCLELFGRDYCFSVIPNTNGDICGHYPRHIVFLEYESSEKEKDTFESTVQVSKLQDLIHRSKMARCRGRFVCPVILFKGKHICRSATLAGWGELYGRSGYNYFFSGGADDAWADVEDVTEEDCALRSGDTHLFDKVRGYDIKLLRYLSVKYICDLMVENKKVKFGMNVTSSEKVDKAQRYADFTLLSIPYPGCEFFKEYKDRDYMAEGLIFNWKQDYVDAPLSIPDFLTHSLNIDWSQYQCWDLVQQTQNYLKLLLSLVNSDDDSGLLVHCISGWDRTPLFISLLRLSLWADGLIHTSLKPTEILYLTVAYDWFLFGHMLVDRLSKGEEIFFFCFNFLKHITSEEFSALKTQRRKSLPARDGGFTLEDICMLRRKDRGSTTSLGSDFSLVMESSPGATGSFTYEAVELVPAGAPTQAAWRKSHSSSPQSVLWNRPQPSEDRLPSQQGLAEARSSSSSSSNHSDNFFRMGSSPLEVPKPRSVDHPLPGSSLSTDYGSWQMVTGCGSIQERAVLHTDSSLPFSFPDELPNSCLLAALSDRETRLQEVRSAFLAAYSSTVGLRAVAPSPSGAIGGLLEQFARGVGLRSISSNAL.

The tract at residues 1 to 27 is disordered; sequence MAGARAAAAAASAGSSASSGNQPPQEL. Lysine 194 bears the N6-acetyllysine mark. N-linked (GlcNAc...) asparagine glycosylation occurs at asparagine 226. Cysteine 330 acts as the Phosphocysteine intermediate in catalysis. A 1,2-diacyl-sn-glycero-3-phospho-(1D-myo-inositol-3,5-bisphosphate)-binding residues include glycine 333, tryptophan 334, aspartate 335, arginine 336, and arginine 382. Positions 333, 334, 335, 336, and 382 each coordinate a 1,2-diacyl-sn-glycero-3-phospho-(1D-myo-inositol-3-phosphate). The tract at residues 476 to 546 is disordered; the sequence is AAWRKSHSSS…PRSVDHPLPG (71 aa). Serine 518 bears the Phosphoserine mark. The N-linked (GlcNAc...) asparagine glycan is linked to asparagine 519. Phosphoserine occurs at positions 530, 580, and 624. Position 638 is an omega-N-methylarginine (arginine 638).

This sequence belongs to the protein-tyrosine phosphatase family. Non-receptor class myotubularin subfamily. In terms of tissue distribution, expressed in various tissues, including heart, skeletal muscle, placenta, liver, lung, kidney and pancreas.

The protein resides in the cytoplasm. The catalysed reaction is a 1,2-diacyl-sn-glycero-3-phospho-(1D-myo-inositol-3,5-bisphosphate) + H2O = a 1,2-diacyl-sn-glycero-3-phospho-(1D-myo-inositol-5-phosphate) + phosphate. The enzyme catalyses a 1,2-diacyl-sn-glycero-3-phospho-(1D-myo-inositol-3-phosphate) + H2O = a 1,2-diacyl-sn-glycero-3-phospho-(1D-myo-inositol) + phosphate. In terms of biological role, lipid phosphatase that specifically dephosphorylates the D-3 position of phosphatidylinositol 3-phosphate and phosphatidylinositol 3,5-bisphosphate, generating phosphatidylinositol and phosphatidylinositol 5-phosphate. In Homo sapiens (Human), this protein is Phosphatidylinositol-3,5-bisphosphate 3-phosphatase MTMR14.